The following is a 465-amino-acid chain: Lactaldehyde dehydrogenase (465 aa).

220–225 (GSVEVG) contacts NAD(+). Active-site residues include Glu-240 and Cys-274.

It belongs to the aldehyde dehydrogenase family. As to quaternary structure, homotetramer.

The enzyme catalyses (S)-lactaldehyde + NAD(+) + H2O = (S)-lactate + NADH + 2 H(+). It functions in the pathway cofactor biosynthesis; coenzyme F420 biosynthesis. In terms of biological role, involved in F420 biosynthesis through the oxidation of lactaldehyde to lactate. In Methanococcus vannielii (strain ATCC 35089 / DSM 1224 / JCM 13029 / OCM 148 / SB), this protein is Lactaldehyde dehydrogenase.